The chain runs to 206 residues: Small ribosomal subunit protein uS4c (206 aa).

The S4 RNA-binding domain occupies 93-161; it reads MRLDNIVYRL…IEKNIELLDK (69 aa).

This sequence belongs to the universal ribosomal protein uS4 family. In terms of assembly, part of the 30S ribosomal subunit. Contacts protein S5. The interaction surface between S4 and S5 is involved in control of translational fidelity.

It localises to the plastid. One of the primary rRNA binding proteins, it binds directly to 16S rRNA where it nucleates assembly of the body of the 30S subunit. Its function is as follows. With S5 and S12 plays an important role in translational accuracy. This is Small ribosomal subunit protein uS4c (rps4) from Euglena longa (Euglenophycean alga).